The following is a 712-amino-acid chain: Eukaryotic translation initiation factor 3 subunit B (712 aa).

An N-acetylmethionine modification is found at Met1. One can recognise an RRM domain in the interval 56–143; the sequence is NIIVVDHLPV…HIFAVNMFDD (88 aa).

The protein belongs to the eIF-3 subunit B family. Component of the eukaryotic translation initiation factor 3 (eIF-3) complex, which is composed of at least 13 different subunits. Binds to the translation initiation factor TIF3H1.

Its subcellular location is the cytoplasm. RNA-binding component of the eukaryotic translation initiation factor 3 (eIF-3) complex, which is involved in protein synthesis of a specialized repertoire of mRNAs and, together with other initiation factors, stimulates binding of mRNA and methionyl-tRNAi to the 40S ribosome. The eIF-3 complex specifically targets and initiates translation of a subset of mRNAs involved in cell proliferation. The chain is Eukaryotic translation initiation factor 3 subunit B (TIF3B1) from Arabidopsis thaliana (Mouse-ear cress).